Here is a 308-residue protein sequence, read N- to C-terminus: uncharacterized protein (308 aa).

This is an uncharacterized protein from Bacillus subtilis (strain 168).